Consider the following 338-residue polypeptide: 3 beta-hydroxysteroid dehydrogenase type 7 (338 aa).

Tyrosine 159 acts as the Proton acceptor in catalysis. Lysine 163 contacts NAD(+). Helical transmembrane passes span 258–278 and 280–300; these read LLPY…QWLL and PLVL…NTTF.

It belongs to the 3-beta-HSD family. High levels in liver and lung, moderate levels in spleen, brain, heart, kidney, jejunum and testis. Up-regulated in 3Y1 cells upon growth arrest.

It is found in the endoplasmic reticulum membrane. It catalyses the reaction 7alpha-hydroxycholesterol + NAD(+) = 7alpha-hydroxycholest-4-en-3-one + NADH + H(+). The catalysed reaction is 7alpha,25-dihydroxycholesterol + NAD(+) = 7alpha,25-dihydroxy-4-cholesten-3-one + NADH + H(+). It carries out the reaction (25R)-cholest-5-en-3beta,7alpha,26-triol + NAD(+) = (25R)-7alpha,26-dihydroxycholest-4-en-3-one + NADH + H(+). The enzyme catalyses (24S)-7alpha-dihydroxycholesterol + NAD(+) = (24S)-7alpha,24-dihydroxycholest-4-en-3-one + NADH + H(+). It participates in lipid metabolism; steroid biosynthesis. In terms of biological role, the 3-beta-HSD enzymatic system plays a crucial role in the biosynthesis of all classes of hormonal steroids. HSD VII is active against four 7-alpha-hydroxylated sterols. Does not metabolize several different C(19/21) steroids as substrates. Involved in bile acid synthesis. Plays a key role in cell positioning and movement in lymphoid tissues by mediating degradation of 7-alpha,25-dihydroxycholesterol (7-alpha,25-OHC): 7-alpha,25-OHC acts as a ligand for the G protein-coupled receptor GPR183/EBI2, a chemotactic receptor for a number of lymphoid cells. This is 3 beta-hydroxysteroid dehydrogenase type 7 from Rattus norvegicus (Rat).